Here is a 218-residue protein sequence, read N- to C-terminus: GCN5-related N-acetyltransferase 9 (218 aa).

Positions 36–183 constitute an N-acetyltransferase domain; sequence SALLEATGSE…KEVTLEYPVT (148 aa). Acetyl-CoA is bound by residues 112-114, 120-125, 152-154, and F159; these read MIA, GKGLGK, and NTA.

The protein belongs to the acetyltransferase family. GNAT subfamily. As to quaternary structure, oligomer. In terms of tissue distribution, expressed throughout the plant.

The protein resides in the cytoplasm. Its subcellular location is the nucleus. The catalysed reaction is an N-terminal L-alpha-aminoacyl-[protein] + acetyl-CoA = N-terminal N(alpha)-acetyl-L-alpha-aminoacyl-[protein] + CoA + H(+). It carries out the reaction L-lysyl-[protein] + acetyl-CoA = N(6)-acetyl-L-lysyl-[protein] + CoA + H(+). Probable protein acetyltransferase with dual specificity triggering both N-alpha-acetylation (NTA) and epsilon-lysine acetylation (KA). The sequence is that of GCN5-related N-acetyltransferase 9 from Arabidopsis thaliana (Mouse-ear cress).